We begin with the raw amino-acid sequence, 629 residues long: Dual specificity tyrosine-phosphorylation-regulated kinase 1B (629 aa).

At Y63 the chain carries Phosphotyrosine. Positions 67–86 (KKRRAQQAPPQDSSTKKEKK) are disordered. Positions 69-86 (RRAQQAPPQDSSTKKEKK) match the Bipartite nuclear localization signal motif. Y92 and Y111 each carry phosphotyrosine. The Protein kinase domain occupies 111-431 (YEIDSLIGKG…PLGALQHGFF (321 aa)). Residue 117 to 125 (IGKGSFGQV) coordinates ATP. Y129 is subject to Phosphotyrosine. K140 is an ATP binding site. Position 171 is a phosphotyrosine (Y171). Position 190–193 (190–193 (FELL)) interacts with ATP. D239 functions as the Proton acceptor in the catalytic mechanism. Residue S262 is modified to Phosphoserine. Y271 bears the Phosphotyrosine; by autocatalysis mark. Y273 is subject to Phosphotyrosine. Positions 380–399 (GVQTGGPGGRRAGEPGHSPA) are disordered. Y401 is modified (phosphotyrosine). 2 disordered regions span residues 436–480 (DEAT…SNDN) and 496–629 (PITD…AASS). Residues 438–477 (ATNTGPAGSSASTSPAPLDTCPSSSTASSISSSGGSSGSS) are compositionally biased toward low complexity. The segment at 480–520 (NRAYRYSNRYCGGPGPPITDCEMNSPQVLPSQPLRPWAGGD) is interaction with RANBP9. 2 stretches are compositionally biased toward pro residues: residues 552 to 562 (PPSPTSPPPPE) and 574 to 585 (DCSPPPPAPAPQ). The residue at position 624 (S624) is a Phosphoserine.

It belongs to the protein kinase superfamily. CMGC Ser/Thr protein kinase family. MNB/DYRK subfamily. Dimer. Interacts with DCOHM, MAP2K3/MKK3, RANBP9 and TCF1/HNF1A. Part of a complex consisting of RANBP9, RAN, DYRK1B and COPS5. Interacts with DCAF7. Interacts with RNF169. Phosphorylated by MAP kinase. Tyrosine phosphorylation may be required for dimerization. As to expression, isoform 1 and isoform 2 are broadly expressed. Isoform 3 seems specific for skeletal muscle (at protein level).

Its subcellular location is the nucleus. It localises to the nucleolus. The protein resides in the chromosome. It carries out the reaction L-seryl-[protein] + ATP = O-phospho-L-seryl-[protein] + ADP + H(+). The enzyme catalyses L-threonyl-[protein] + ATP = O-phospho-L-threonyl-[protein] + ADP + H(+). The catalysed reaction is L-tyrosyl-[protein] + ATP = O-phospho-L-tyrosyl-[protein] + ADP + H(+). With respect to regulation, inhibited by RANBP9. Dual-specificity kinase which possesses both serine/threonine and tyrosine kinase activities. Plays an essential role in ribosomal DNA (rDNA) double-strand break repair and rDNA copy number maintenance. During DNA damage, mediates transcription silencing in part via phosphorylating and enforcing DSB accumulation of the histone methyltransferase EHMT2. Enhances the transcriptional activity of TCF1/HNF1A and FOXO1. Inhibits epithelial cell migration. Mediates colon carcinoma cell survival in mitogen-poor environments. Inhibits the SHH and WNT1 pathways, thereby enhancing adipogenesis. In addition, promotes expression of the gluconeogenic enzyme glucose-6-phosphatase catalytic subunit 1 (G6PC1). This chain is Dual specificity tyrosine-phosphorylation-regulated kinase 1B (Dyrk1b), found in Mus musculus (Mouse).